An 82-amino-acid polypeptide reads, in one-letter code: Small ribosomal subunit protein bS20 (82 aa).

The disordered stretch occupies residues 1-29 (MPNIKSAKKDLRRSRAAAVRNRAQRSALR). The span at 16-29 (AAAVRNRAQRSALR) shows a compositional bias: low complexity.

This sequence belongs to the bacterial ribosomal protein bS20 family.

Its function is as follows. Binds directly to 16S ribosomal RNA. The protein is Small ribosomal subunit protein bS20 of Gemmatimonas aurantiaca (strain DSM 14586 / JCM 11422 / NBRC 100505 / T-27).